The primary structure comprises 286 residues: MTKIIDGKAVAKKVNAQTATAVAELAAQGIQPGIAVIIVGDDAASQIYVRNKNRKATKLGMHSVVRQLPATTSQDELLAIIAAYNADDSIHGILVQSPLPAQINEPLITMAIDPKKDVDGFHPTNVGKLITNFPGNYPVANTPRGIMTMLADYGVDPAGKTAVVIGRSTIVGKPMAALLTNANATVTIAHSKTADLKAVARTADILVVATGIAHLITGADIKPGATVIDVGMDRDENGKLVGDVDFDSAQGIAGLITPVPGGVGPMTIATLMQTTVELAKWSDVSE.

NADP(+) contacts are provided by residues 166-168 (GRS) and S191.

It belongs to the tetrahydrofolate dehydrogenase/cyclohydrolase family. As to quaternary structure, homodimer.

The enzyme catalyses (6R)-5,10-methylene-5,6,7,8-tetrahydrofolate + NADP(+) = (6R)-5,10-methenyltetrahydrofolate + NADPH. The catalysed reaction is (6R)-5,10-methenyltetrahydrofolate + H2O = (6R)-10-formyltetrahydrofolate + H(+). Its pathway is one-carbon metabolism; tetrahydrofolate interconversion. Functionally, catalyzes the oxidation of 5,10-methylenetetrahydrofolate to 5,10-methenyltetrahydrofolate and then the hydrolysis of 5,10-methenyltetrahydrofolate to 10-formyltetrahydrofolate. In Lactiplantibacillus plantarum (strain ATCC BAA-793 / NCIMB 8826 / WCFS1) (Lactobacillus plantarum), this protein is Bifunctional protein FolD.